The following is a 572-amino-acid chain: MAELVQGQSAPVGMKAEGFVDALHRVRQIAAKIDSIPHLNNSTPLVDPSVYGYGVQKRPLDDGVGNQLGALVHQRTVITEEFKVPDKMVGFIIGRGGEQISRIQAESGCKIQIASESSGIPERPCVLTGTPESIEQAKRLLGQIVDRCRNGPGFHNDIDSNSTIQEILIPASKVGLVIGRGGETIKQLQERTGVKMVMIQDGPLPTGADKPLRITGDAFKVQQAREMVLEIIREKDQADFRGVRGDFNSRMGGGSIEVSVPRFAVGIVIGRNGEMIKKIQNDAGVRIQFKPDDGISPERAAQVMGPPDRCQHAAHIISELILTAQERDGFGGLAAARGRGRGRGDWSVGAPGGVQEITYTVPADKCGLVIGKGGENIKSINQQSGAHVELQRNPPPNSDPNLRRFTIRGVPQQIEVARQLIDEKVGGTNLGAPGAFGQSPFSQPPAPPHQNTFPPRSSGCFPNMAAKVNGNPHSTPVSGPPAFLTQGWGSTYQAWQQPTQQVPSQQSQPQSSQPNYSKAWEDYYKKQSHAASAAPQASSPPDYTMAWAEYYRQQVAFYGQTLGQAQAHSQEQ.

A2 carries the post-translational modification N-acetylalanine. Glycyl lysine isopeptide (Lys-Gly) (interchain with G-Cter in SUMO2) cross-links involve residues K15 and K57. Phosphothreonine is present on T76. KH domains follow at residues 77–141, 162–228, 253–317, and 354–421; these read VITE…KRLL, STIQ…REMV, GGSI…AHII, and VQEI…RQLI. S296 is modified (phosphoserine). A disordered region spans residues 426 to 521; it reads GGTNLGAPGA…SQPNYSKAWE (96 aa). A compositionally biased stretch (low complexity) spans 496–514; the sequence is QQPTQQVPSQQSQPQSSQP. 2 positions are modified to phosphoserine: S539 and S569.

In terms of tissue distribution, detected in a number of cell lines.

Its subcellular location is the nucleus. In terms of biological role, may interact with single-stranded DNA from the far-upstream element (FUSE). May activate gene expression. The protein is Far upstream element-binding protein 3 (FUBP3) of Homo sapiens (Human).